Consider the following 110-residue polypeptide: UPF0060 membrane protein Rpic_4131 (110 aa).

4 helical membrane-spanning segments follow: residues 8–28, 33–53, 65–85, and 88–108; these read VLFA…WLVL, PFWL…LLTL, YGGV…GVAL, and WDVG…LQPQ.

The protein belongs to the UPF0060 family.

It is found in the cell inner membrane. In Ralstonia pickettii (strain 12J), this protein is UPF0060 membrane protein Rpic_4131.